The primary structure comprises 932 residues: 3-hydroxy-3-methylglutaryl-coenzyme A reductase (932 aa).

6 consecutive transmembrane segments (helical) span residues V20–L40, L59–L79, I92–I112, H113–I133, M162–I182, and V193–F213. A glycan (N-linked (GlcNAc...) asparagine) is linked at N279. Residues I322–A342 form a helical membrane-spanning segment. Positions T343 to E467 are linker. A compositionally biased stretch (basic and acidic residues) spans V357–A367. Residues V357 to V442 form a disordered region. The span at G374 to V403 shows a compositional bias: polar residues. A compositionally biased stretch (low complexity) spans S406 to V421. The segment at I468–S932 is catalytic. Active-site charge relay system residues include E575, K707, and D783. A glycan (N-linked (GlcNAc...) asparagine) is linked at N850. The active-site Proton donor is H882. A glycan (N-linked (GlcNAc...) asparagine) is linked at N886. S888 is modified (phosphoserine; by AMPK).

It belongs to the HMG-CoA reductase family.

The protein localises to the endoplasmic reticulum membrane. It carries out the reaction (R)-mevalonate + 2 NADP(+) + CoA = (3S)-3-hydroxy-3-methylglutaryl-CoA + 2 NADPH + 2 H(+). The protein operates within metabolic intermediate biosynthesis; (R)-mevalonate biosynthesis; (R)-mevalonate from acetyl-CoA: step 3/3. Functionally, this transmembrane glycoprotein is involved in the control of cholesterol biosynthesis. It is the rate-limiting enzyme of sterol biosynthesis. The chain is 3-hydroxy-3-methylglutaryl-coenzyme A reductase (HMGCR) from Strongylocentrotus purpuratus (Purple sea urchin).